We begin with the raw amino-acid sequence, 888 residues long: Transmembrane channel-like protein 2 (888 aa).

Residues 1-128 (MSPQLKSLDE…SLGSSVSTGD (128 aa)) form a disordered region. Topologically, residues 1-228 (MSPQLKSLDE…KIKDIESHFG (228 aa)) are cytoplasmic. Composition is skewed to basic and acidic residues over residues 7-16 (SLDEEGDKSA), 32-44 (DGHR…KDPA), and 87-110 (RTSL…EAGK). Polar residues predominate over residues 117-128 (STSLGSSVSTGD). The helical transmembrane segment at 229-266 (SSVASYFIFLRWMYGVNLVLFGLIFGLVIIPEVLMGMP) threads the bilayer. The Extracellular segment spans residues 267 to 317 (YGSIPRKTVPRAEEERAMDFSVLWDFEGYIKYSALFYGYYNNQRTIGWLRY). The helical transmembrane segment at 318-350 (RLPMAYFMVGVSVFGYSLMIVIRSMASNTQGST) threads the bilayer. Over 351–406 (SEGDSDSFTFSFKMFTSWDYLIGNSETADNKYVSITTSFKESIVDEQESNKEGNIH) the chain is Cytoplasmic. A helical transmembrane segment spans residues 407–437 (LTRFLRVLANFLILCCLCGSGYLIYFVVKRS). Topologically, residues 438-447 (QEFSKMQNVS) are extracellular. The chain crosses the membrane as a helical span at residues 448–475 (WYERNEVEIVMSLLGMFCPPLFETIAAL). The Cytoplasmic segment spans residues 476–479 (ENYH). The helical transmembrane segment at 480 to 514 (PRTGLKWQLGRIFALFLGNLYTFLLALMDDVHLKL) threads the bilayer. The Extracellular portion of the chain corresponds to 515–556 (SNEEKIKNITHWTLFNYYNSSGGNESVPRPPPHPADVPRGSC). Residues 557-594 (WETAVGIEFMRLTVSDMLVTYLTILVGDFLRACFVRFM) form a helical membrane-spanning segment. The Cytoplasmic segment spans residues 595–613 (NHCWCWDLEAGFPSYAEFD). Residues 614–634 (ISGNVLGLIFNQGMIWMGSFY) form a helical membrane-spanning segment. Over 635–637 (APG) the chain is Extracellular. Residues 638–660 (LVGINVLRLLTSMYFQCWAVMSS) traverse the membrane as a helical segment. Residues 661–674 (NVPHERVFKASRSN) are Cytoplasmic-facing. A helical membrane pass occupies residues 675–698 (NFYMGLLLLVLFLSLLPVAYTVMS). Over 699–741 (LPPSFDCGPFSGKNRMYDVLHETIENDFPKFLGKIFAFLANPG) the chain is Extracellular. Residues 742–775 (LIIPAILLMFLAIYYLNSVSKSLSRANAQLRKKI) form a helical membrane-spanning segment. At 776-888 (QALREVEKNH…SGKRTQRPHN (113 aa)) the chain is on the cytoplasmic side. The disordered stretch occupies residues 813–888 (LTKEEPTSHS…SGKRTQRPHN (76 aa)). Polar residues-rich tracts occupy residues 836-851 (PHTS…STSW) and 866-881 (GQPQ…PSGK).

The protein belongs to the TMC family. As to quaternary structure, forms the MET channel composed of TMC dimer (TMC1 or TMC2), TMIE, TOMT, CIB (CIB2 or CIB3), LHFPL5 and PDH15. The interaction of TMC1 and TMC2 with TOMT is required for the transportation of TMC1/2 into the stereocilia of hair cells. Interacts (via N-terminus) with both isoforms CD1 and CD3 of PCDH15. Can form a heterodimer with TMC1, TMC5 or TMC7. As to expression, inner ear and testis. Expressed in cochlear inner and outer hair cells and vestibular organ hair cells.

Its subcellular location is the cell membrane. It catalyses the reaction Ca(2+)(in) = Ca(2+)(out). Pore-forming subunit of the mechanotransducer (MET) non-selective cation channel complex located at the tips of stereocilia of cochlear hair cells and that mediates sensory transduction in the auditory system. The MET complex is composed of two dimeric pore-forming ion-conducting transmembrane TMC (TMC1 or TMC2) subunits, several auxiliary proteins including LHFPL5, TMIE, CIB2/3 and TOMT, the tip-link PCDH15, and possibly the PIEZO subunits. MET channel is activated by tension in the tip-link extending from the side wall of one stereocilium to the tip of the adjacent shorter stereocilium, where the channel is located. TMC2 MET channel is highly permeable to calcium and likely transports monovalent cations. Also involved in vestibular hair cell transduction current of the mammalian inner ear. This chain is Transmembrane channel-like protein 2, found in Mus musculus (Mouse).